The sequence spans 344 residues: Phosphoribosylformylglycinamidine cyclo-ligase (344 aa).

It belongs to the AIR synthase family.

It is found in the cytoplasm. The catalysed reaction is 2-formamido-N(1)-(5-O-phospho-beta-D-ribosyl)acetamidine + ATP = 5-amino-1-(5-phospho-beta-D-ribosyl)imidazole + ADP + phosphate + H(+). Its pathway is purine metabolism; IMP biosynthesis via de novo pathway; 5-amino-1-(5-phospho-D-ribosyl)imidazole from N(2)-formyl-N(1)-(5-phospho-D-ribosyl)glycinamide: step 2/2. The sequence is that of Phosphoribosylformylglycinamidine cyclo-ligase from Anaeromyxobacter sp. (strain Fw109-5).